Reading from the N-terminus, the 467-residue chain is Asparagine--tRNA ligase (467 aa).

This sequence belongs to the class-II aminoacyl-tRNA synthetase family. As to quaternary structure, homodimer.

Its subcellular location is the cytoplasm. The enzyme catalyses tRNA(Asn) + L-asparagine + ATP = L-asparaginyl-tRNA(Asn) + AMP + diphosphate + H(+). This is Asparagine--tRNA ligase from Bacteroides fragilis (strain YCH46).